Reading from the N-terminus, the 279-residue chain is MLTLGEALRDATATLERAGVASPLVDARLIAAHLLGCGPLDIALRMRDEVPAGFAAAVERRARREPLQHILGTAPMGPLDLHVGPGVFIPRPETEVLADWAVRQVAGDVEKRKIVDLCTGSGALAAYIGHALIDATLYAVELDPGAATWAQRNFDEFAPQVKLIHGDVTDPTLLAEVHGTIDLVVSNPPYVPESDDLDPEVYQDPHMAVFSGADGMDVINKMVHLIFNLLKSGGAVGIEHDDTTSDAVRQVFSQHGGFGTIEVLHDLTGRARFVTARKL.

Positions 141 and 187 each coordinate S-adenosyl-L-methionine. 187–190 contacts substrate; that stretch reads NPPY.

This sequence belongs to the protein N5-glutamine methyltransferase family. PrmC subfamily.

It catalyses the reaction L-glutaminyl-[peptide chain release factor] + S-adenosyl-L-methionine = N(5)-methyl-L-glutaminyl-[peptide chain release factor] + S-adenosyl-L-homocysteine + H(+). Methylates the class 1 translation termination release factors RF1/PrfA and RF2/PrfB on the glutamine residue of the universally conserved GGQ motif. In Corynebacterium glutamicum (strain ATCC 13032 / DSM 20300 / JCM 1318 / BCRC 11384 / CCUG 27702 / LMG 3730 / NBRC 12168 / NCIMB 10025 / NRRL B-2784 / 534), this protein is Release factor glutamine methyltransferase.